Consider the following 163-residue polypeptide: 3-isopropylmalate dehydratase small subunit (163 aa).

This sequence belongs to the LeuD family. LeuD type 2 subfamily. Heterodimer of LeuC and LeuD.

It carries out the reaction (2R,3S)-3-isopropylmalate = (2S)-2-isopropylmalate. It participates in amino-acid biosynthesis; L-leucine biosynthesis; L-leucine from 3-methyl-2-oxobutanoate: step 2/4. Its function is as follows. Catalyzes the isomerization between 2-isopropylmalate and 3-isopropylmalate, via the formation of 2-isopropylmaleate. This chain is 3-isopropylmalate dehydratase small subunit, found in Brachyspira hyodysenteriae (strain ATCC 49526 / WA1).